The chain runs to 274 residues: Bis(5'-nucleosyl)-tetraphosphatase, symmetrical (274 aa).

Belongs to the Ap4A hydrolase family.

The catalysed reaction is P(1),P(4)-bis(5'-adenosyl) tetraphosphate + H2O = 2 ADP + 2 H(+). Its function is as follows. Hydrolyzes diadenosine 5',5'''-P1,P4-tetraphosphate to yield ADP. In Erwinia tasmaniensis (strain DSM 17950 / CFBP 7177 / CIP 109463 / NCPPB 4357 / Et1/99), this protein is Bis(5'-nucleosyl)-tetraphosphatase, symmetrical.